The following is a 382-amino-acid chain: MKITKITTYRLPPRWMFLKIETDEGVVGWGEPVIEGRARTVEAAVHELSDYLIGQDPSRINDLWQVMYRAGFYRGGPILMSAIAGIDQALWDIKGKVLNAPVWQLMGGLVRDKIKAYSWVGGDRPADVIDGIKTLREIGFDTFKLNGCEELGLIDNSRAVDAAVNTVAQIREAFGNQIEFGLDFHGRVSAPMAKVLIKELEPYRPLFIEEPVLAEQAEYYPKLAAQTHIPLAAGERMFSRFDFKRVLEAGGISILQPDLSHAGGITECYKIAGMAEAYDVTLAPHCPLGPIALAACLHIDFVSYNAVLQEQSMGIHYNKGAELLDFVKNKEDFSMAGGFFKPLTKPGLGVEIDEAKVIEFSKNAPDWRNPLWRHEDNSVAEW.

Residue Asp-183 coordinates Mg(2+). Catalysis depends on His-185, which acts as the Proton donor. Mg(2+) contacts are provided by Glu-209 and Glu-235. His-285 acts as the Proton acceptor in catalysis.

This sequence belongs to the mandelate racemase/muconate lactonizing enzyme family. GalD subfamily. It depends on Mg(2+) as a cofactor.

It carries out the reaction D-galactonate = 2-dehydro-3-deoxy-D-galactonate + H2O. It participates in carbohydrate acid metabolism; D-galactonate degradation; D-glyceraldehyde 3-phosphate and pyruvate from D-galactonate: step 1/3. Its function is as follows. Catalyzes the dehydration of D-galactonate to 2-keto-3-deoxy-D-galactonate. The polypeptide is D-galactonate dehydratase (Escherichia coli (strain UTI89 / UPEC)).